The following is a 723-amino-acid chain: Pentatricopeptide repeat-containing protein At5g50280, chloroplastic (723 aa).

The N-terminal 44 residues, 1–44 (MSMASSSLATQSFFSSFPLSHRLHFPVPYLLLRSSFFRKPLSLS), are a transit peptide targeting the chloroplast. Positions 70–97 (IQQPENSTINSEESECEEEDDEEGDDFT) are disordered. Residues 81–97 (EESECEEEDDEEGDDFT) show a composition bias toward acidic residues. 11 PPR repeats span residues 272–306 (DVRL…NVYP), 307–342 (DNVT…GVKW), 343–377 (SQDV…GIRS), 378–412 (NTIV…GLKP), 413–447 (SAAT…GLEP), 448–483 (NVKS…GLKP), 484–518 (SSHS…GIKP), 519–553 (SVET…KIKG), 554–588 (TRIT…GLQP), 589–623 (SVMT…NLKP), and 624–658 (DSIT…GQVP). The interval 700–723 (TKGKKDEFWKYKTNRTTSPGRHRS) is disordered. Over residues 713–723 (NRTTSPGRHRS) the composition is skewed to polar residues.

It belongs to the PPR family. P subfamily.

It localises to the plastid. Its subcellular location is the chloroplast. This Arabidopsis thaliana (Mouse-ear cress) protein is Pentatricopeptide repeat-containing protein At5g50280, chloroplastic (EMB1006).